The primary structure comprises 484 residues: UDP-N-acetylmuramoyl-L-alanyl-D-glutamate--2,6-diaminopimelate ligase (484 aa).

Ser29 contributes to the UDP-N-acetyl-alpha-D-muramoyl-L-alanyl-D-glutamate binding site. Position 108–114 (108–114 (GTSGKTS)) interacts with ATP. UDP-N-acetyl-alpha-D-muramoyl-L-alanyl-D-glutamate-binding positions include 150-151 (TT), Ser177, Gln183, and Arg185. Position 217 is an N6-carboxylysine (Lys217). Meso-2,6-diaminopimelate-binding positions include Arg381, 405-408 (DNPR), Gly453, and Glu457. Positions 405–408 (DNPR) match the Meso-diaminopimelate recognition motif motif.

The protein belongs to the MurCDEF family. MurE subfamily. The cofactor is Mg(2+). In terms of processing, carboxylation is probably crucial for Mg(2+) binding and, consequently, for the gamma-phosphate positioning of ATP.

Its subcellular location is the cytoplasm. The catalysed reaction is UDP-N-acetyl-alpha-D-muramoyl-L-alanyl-D-glutamate + meso-2,6-diaminopimelate + ATP = UDP-N-acetyl-alpha-D-muramoyl-L-alanyl-gamma-D-glutamyl-meso-2,6-diaminopimelate + ADP + phosphate + H(+). It functions in the pathway cell wall biogenesis; peptidoglycan biosynthesis. In terms of biological role, catalyzes the addition of meso-diaminopimelic acid to the nucleotide precursor UDP-N-acetylmuramoyl-L-alanyl-D-glutamate (UMAG) in the biosynthesis of bacterial cell-wall peptidoglycan. The chain is UDP-N-acetylmuramoyl-L-alanyl-D-glutamate--2,6-diaminopimelate ligase from Mesorhizobium japonicum (strain LMG 29417 / CECT 9101 / MAFF 303099) (Mesorhizobium loti (strain MAFF 303099)).